The primary structure comprises 473 residues: Fumarate hydratase class II (473 aa).

Substrate contacts are provided by residues 104 to 106, 128 to 131, 138 to 140, and threonine 186; these read SGT, HPND, and SSN. Histidine 187 functions as the Proton donor/acceptor in the catalytic mechanism. Residue serine 318 is part of the active site. Substrate-binding positions include serine 319 and 324 to 326; that span reads KVN.

The protein belongs to the class-II fumarase/aspartase family. Fumarase subfamily. As to quaternary structure, homotetramer.

Its subcellular location is the cytoplasm. It catalyses the reaction (S)-malate = fumarate + H2O. Its pathway is carbohydrate metabolism; tricarboxylic acid cycle; (S)-malate from fumarate: step 1/1. Involved in the TCA cycle. Catalyzes the stereospecific interconversion of fumarate to L-malate. The sequence is that of Fumarate hydratase class II from Corynebacterium glutamicum (strain ATCC 13032 / DSM 20300 / JCM 1318 / BCRC 11384 / CCUG 27702 / LMG 3730 / NBRC 12168 / NCIMB 10025 / NRRL B-2784 / 534).